A 313-amino-acid chain; its full sequence is Glucosyl-dolichyl phosphate glucuronosyltransferase (313 aa).

A helical membrane pass occupies residues 284 to 304 (LIAIFVFTAAVGFGYVYGLLT).

This sequence belongs to the glycosyltransferase 2 family.

The protein resides in the cell membrane. It catalyses the reaction an archaeal dolichyl alpha-D-glucosyl phosphate + UDP-alpha-D-glucuronate = an archaeal dolichyl beta-D-glucuronosyl-(1-&gt;4)-alpha-D-glucosyl phosphate + UDP + H(+). It participates in cell surface structure biogenesis; S-layer biogenesis. Its function is as follows. Involved in the protein N-glycosylation pathway responsible for the assembly and attachment of an N-linked pentasaccharide that decorates the S-layer glycoprotein and flagellins. Catalyzes the transfer of a glucuronate residue (GlcA) to a glucose residue already bound to a dolichol phosphate (DolP), a compound that serves as a glycan lipid carrier in Archaea. In vitro, is able to add GlcA to DolP-Glc in which the omega-position isoprene is not saturated. However, the likely physiological lipid substrate is alpha,omega-saturated. In Haloferax volcanii (strain ATCC 29605 / DSM 3757 / JCM 8879 / NBRC 14742 / NCIMB 2012 / VKM B-1768 / DS2) (Halobacterium volcanii), this protein is Glucosyl-dolichyl phosphate glucuronosyltransferase.